A 577-amino-acid polypeptide reads, in one-letter code: Arginine--tRNA ligase (577 aa).

The short motif at 122–132 (PNVAKEMHVGH) is the 'HIGH' region element.

This sequence belongs to the class-I aminoacyl-tRNA synthetase family. In terms of assembly, monomer.

It is found in the cytoplasm. It carries out the reaction tRNA(Arg) + L-arginine + ATP = L-arginyl-tRNA(Arg) + AMP + diphosphate. This is Arginine--tRNA ligase from Klebsiella pneumoniae subsp. pneumoniae (strain ATCC 700721 / MGH 78578).